Consider the following 189-residue polypeptide: Elongation factor P (189 aa).

Belongs to the elongation factor P family.

Its subcellular location is the cytoplasm. Its pathway is protein biosynthesis; polypeptide chain elongation. Functionally, involved in peptide bond synthesis. Stimulates efficient translation and peptide-bond synthesis on native or reconstituted 70S ribosomes in vitro. Probably functions indirectly by altering the affinity of the ribosome for aminoacyl-tRNA, thus increasing their reactivity as acceptors for peptidyl transferase. The polypeptide is Elongation factor P (Pseudomonas syringae pv. syringae (strain B728a)).